The primary structure comprises 160 residues: Deoxyuridine 5'-triphosphate nucleotidohydrolase (160 aa).

Substrate is bound by residues 72 to 74 (RSG), asparagine 85, and 89 to 91 (TID).

Belongs to the dUTPase family. Mg(2+) serves as cofactor.

The catalysed reaction is dUTP + H2O = dUMP + diphosphate + H(+). It functions in the pathway pyrimidine metabolism; dUMP biosynthesis; dUMP from dCTP (dUTP route): step 2/2. Its function is as follows. This enzyme is involved in nucleotide metabolism: it produces dUMP, the immediate precursor of thymidine nucleotides and it decreases the intracellular concentration of dUTP so that uracil cannot be incorporated into DNA. The polypeptide is Deoxyuridine 5'-triphosphate nucleotidohydrolase (Methylocella silvestris (strain DSM 15510 / CIP 108128 / LMG 27833 / NCIMB 13906 / BL2)).